We begin with the raw amino-acid sequence, 341 residues long: tRNA N6-adenosine threonylcarbamoyltransferase (341 aa).

Residues His115 and His119 each contribute to the Fe cation site. Substrate contacts are provided by residues 137–141 (IVSGG), Asp170, Gly183, Asp187, and Asn276. Fe cation is bound at residue Asp304.

The protein belongs to the KAE1 / TsaD family. It depends on Fe(2+) as a cofactor.

The protein localises to the cytoplasm. It catalyses the reaction L-threonylcarbamoyladenylate + adenosine(37) in tRNA = N(6)-L-threonylcarbamoyladenosine(37) in tRNA + AMP + H(+). In terms of biological role, required for the formation of a threonylcarbamoyl group on adenosine at position 37 (t(6)A37) in tRNAs that read codons beginning with adenine. Is involved in the transfer of the threonylcarbamoyl moiety of threonylcarbamoyl-AMP (TC-AMP) to the N6 group of A37, together with TsaE and TsaB. TsaD likely plays a direct catalytic role in this reaction. The polypeptide is tRNA N6-adenosine threonylcarbamoyltransferase (Staphylococcus aureus (strain MRSA252)).